A 1434-amino-acid polypeptide reads, in one-letter code: Probable ATP-dependent RNA helicase spindle-E (1434 aa).

Residues Ile126–Val295 form the Helicase ATP-binding domain. An ATP-binding site is contributed by Gly139–Thr146. The short motif at Asp241–His244 is the DEAH box element. A Helicase C-terminal domain is found at Thr356–Lys527. The region spanning Ala936–His999 is the Tudor domain.

This sequence belongs to the DEAD box helicase family. DEAH subfamily.

Its subcellular location is the cytoplasm. It carries out the reaction ATP + H2O = ADP + phosphate + H(+). Its function is as follows. Probable ATP-binding RNA helicase which plays a central role during spermatogenesis and oogenesis by repressing transposable elements and preventing their mobilization, which is essential for the germline integrity. Acts via the piRNA metabolic process, which mediates the repression of transposable elements during meiosis by forming complexes composed of piRNAs and Piwi and govern the methylation and subsequent repression of transposons. Involved in the repression of LTR retrotransposon copia. Also involved in telomere regulation by repressing specialized telomeric retroelements HeT-A, TAHRE, and TART; Drosophila telomeres being maintained by transposition of specialized telomeric retroelements. Involved in telomeric trans-silencing, a repression mechanism by which a transposon or a transgene inserted in subtelomeric heterochromatin has the capacity to repress in trans in the female germline, a homologous transposon, or transgene located in euchromatin. Involved in the repression of testis-expressed Stellate genes by the homologous Su(Ste) repeats. Required for anteroposterior and dorsoventral axis formation during oogenesis. The polypeptide is Probable ATP-dependent RNA helicase spindle-E (spn-E) (Drosophila persimilis (Fruit fly)).